Consider the following 89-residue polypeptide: Small ribosomal subunit protein uS15 (89 aa).

It belongs to the universal ribosomal protein uS15 family. Part of the 30S ribosomal subunit. Forms a bridge to the 50S subunit in the 70S ribosome, contacting the 23S rRNA.

Its function is as follows. One of the primary rRNA binding proteins, it binds directly to 16S rRNA where it helps nucleate assembly of the platform of the 30S subunit by binding and bridging several RNA helices of the 16S rRNA. In terms of biological role, forms an intersubunit bridge (bridge B4) with the 23S rRNA of the 50S subunit in the ribosome. This chain is Small ribosomal subunit protein uS15, found in Chlamydia abortus (strain DSM 27085 / S26/3) (Chlamydophila abortus).